Consider the following 261-residue polypeptide: Dienlactone hydrolase 1 (261 aa).

Residues C147, D194, and H226 contribute to the active site.

It belongs to the dienelactone hydrolase family.

It functions in the pathway xenobiotic degradation. Functionally, dienlactone hydrolase; part of the Fusarium detoxification of benzoxazolinone cluster 1 (FDB1) involved in the degradation of benzoxazolinones produced by the host plant. Maize, wheat, and rye produce the 2 benzoxazinone phytoanticipins 2,4-dihy-droxy-7-methoxy-1,4-benzoxazin-3-one (DIMBOA) and 2,4-dihydroxy-1,4-benzoxazin-3-one (DIBOA) that, due to their inherent instability once released, spontaneously degrade to the more stable corresponding benzoxazolinones, 6-methoxy-2-benzoxazolinone (MBOA) and 2-benzoxazolinone (BOA), respectively. The first step in the detoxification of benzoxazolinones involves the hydrolysis of the cyclic ester bond of benzoxazolinones by the FDB1 cluster gamma-lactamase MBL1 to aminophenols. MBL1 is able to convert BOA into 2-aminophenol (2-AP), as well as MBOA into 5-methoxy-2-aminophenol (2-AMP). The FDB2 cluster N-malonyltransferase FDB2/NAT1 then metabolizes aminophenols via N-malonylation to non-toxic malonamic acids. FDB2/NAT1 converts 2-AP into N-(2-hydroxyphenyl) malonamic acid (HPMA) and 2-AMP into N-(2-hydroxy-4-methoxyphenyl) malonamic acid (HMPMA). The duplicated dienlactone hydrolases DLH1 and DLH2 may provide redundant function for hydrolyzing the lactone moiety in the BOA molecule. The roles of the amidases and other enzymes encoded by the 2 FDB clusters have not been identified so far. This chain is Dienlactone hydrolase 1, found in Gibberella moniliformis (strain M3125 / FGSC 7600) (Maize ear and stalk rot fungus).